Here is a 2344-residue protein sequence, read N- to C-terminus: Genome polyprotein (2344 aa).

In terms of domain architecture, SF3 helicase spans 492–653; sequence QKVISDLHTM…ESWQATRHGS (162 aa). Residue 522-529 coordinates ATP; that stretch reads GAPGIGKT. Tyr-1014 carries the O-(5'-phospho-RNA)-tyrosine modification. At Tyr-1014 the chain carries O-UMP-tyrosine; transient. The Peptidase C24 domain maps to 1109–1244; the sequence is GLPGFMRHNG…SKMCTLIDLT (136 aa). Active-site for 3CLpro activity residues include His-1135, Asp-1152, and Cys-1212. One can recognise a RdRp catalytic domain in the interval 1495-1619; it reads SDFLCLDYSK…AMTPMMVSLL (125 aa). Cys-1584 and Cys-1591 are joined by a disulfide. Residues 1771–1796 form a disordered region; that stretch reads RTAPQGEAAGTATTASVPGTTTDGMD. Over residues 1778-1794 the composition is skewed to low complexity; sequence AAGTATTASVPGTTTDG.

Homodimer. As to quaternary structure, homomultimer. Interacts with host type II histo-blood group structures antigens at the surface of target cells. Mn(2+) serves as cofactor. Specific enzymatic cleavages by its own cysteine protease yield mature proteins. The protease cleaves itself from the nascent polyprotein autocatalytically. Precursor p41 can be cleaved by viral 3CLpro into protein p19 and VPg, or cleaved by host protease into protein p23/2 and protein p18. Post-translationally, VPg is uridylylated by the polymerase and is covalently attached to the 5'-end of the polyadenylated genomic and subgenomic RNAs. This uridylylated form acts as a nucleotide-peptide primer for the polymerase.

It is found in the host cytoplasm. The protein resides in the host endoplasmic reticulum. The protein localises to the virion. The enzyme catalyses a ribonucleoside 5'-triphosphate + H2O = a ribonucleoside 5'-diphosphate + phosphate + H(+). It carries out the reaction Endopeptidase with a preference for cleavage when the P1 position is occupied by Glu-|-Xaa and the P1' position is occupied by Gly-|-Yaa.. The catalysed reaction is RNA(n) + a ribonucleoside 5'-triphosphate = RNA(n+1) + diphosphate. Together with NTPase and NS4, initiates the formation of the replication complex. Induces the proliferation of the host smooth ER membranes forming long tubular structures. These remodeled membranes probably form the viral factories that contain the replication complex. In terms of biological role, displays NTPase activity, but no helicase activity. Induces the formation of convoluted membranes derived from the host ER. These remodeled membranes probably form the viral factories that contain the replication complex. Together with NS2 and NS4, initiates the formation of the replication complex. Functionally, probable key protein responsible for the formation of membrane alterations by the virus. Induces the formation of convoluted membranes derived from the host ER. These remodeled membranes probably form the viral factories that contain the replication complex. Together with NS2 and NTPase, initiates the formation of the replication complex. Its function is as follows. Viral genome-linked protein is covalently linked to the 5'-end of the positive-strand, negative-strand genomic RNAs and subgenomic RNA. Acts as a genome-linked replication primer. May recruit ribosome to viral RNA thereby promoting viral proteins translation. Interacts with host translation initiation complex to allow the translation of viral proteins. Processes the polyprotein. 3CLpro-RdRp is first released by autocleavage, then all other proteins are cleaved. May cleave polyadenylate-binding protein thereby inhibiting cellular translation. In terms of biological role, replicates genomic and antigenomic RNA by recognizing replications specific signals. Also transcribes a subgenomic mRNA by initiating RNA synthesis internally on antigenomic RNA. This sgRNA codes for structural proteins. Catalyzes the covalent attachment VPg with viral RNAs. Functionally, capsid protein VP60 self assembles to form an icosahedral capsid with a T=3 symmetry, about 35 nm in diameter, and consisting of 180 capsid proteins. A smaller form of capsid with a diameter of 23 nm might be capsid proteins assembled as icosahedron with T=1 symmetry. The capsid encapsulate VP2 proteins and genomic or subgenomic RNA. Attaches virion to target cells by binding histo-blood group antigens, inducing endocytosis of the viral particle. Acidification of the endosome induces conformational change of capsid protein thereby injecting virus genomic RNA into host cytoplasm. The chain is Genome polyprotein from Oryctolagus cuniculus (Rabbit).